Here is a 695-residue protein sequence, read N- to C-terminus: Probable serine/threonine-protein kinase DDB_G0279405 (695 aa).

Disordered regions lie at residues 119–138 (IVAQ…PQPQ) and 149–192 (QIPT…KRHK). Over residues 124 to 138 (QPQPQPQPQPQPQPQ) the composition is skewed to pro residues. Residues 149-160 (QIPTTPPQQISQ) are compositionally biased toward low complexity. A compositionally biased stretch (polar residues) spans 161–173 (FNITGNKSPSSIG). The Protein kinase domain maps to 201 to 462 (YVFVRKLGKG…IAEIKSHKWT (262 aa)). ATP contacts are provided by residues 207-215 (LGKGTFGKV) and Lys230. The active-site Proton acceptor is the Asp329. Residues 491–580 (TDHTIKPSDN…NQNQNNNNNS (90 aa)) are disordered. A compositionally biased stretch (low complexity) spans 510–528 (LSSSSGGESSGIIGSSNES). A compositionally biased stretch (polar residues) spans 529–541 (KSMYNNVNSKQKI). A compositionally biased stretch (low complexity) spans 542-580 (QNQNQNQNQNQNQNQNQNQNQNHNQNQNQNQNQNNNNNS).

It belongs to the protein kinase superfamily. Ser/Thr protein kinase family.

The enzyme catalyses L-seryl-[protein] + ATP = O-phospho-L-seryl-[protein] + ADP + H(+). The catalysed reaction is L-threonyl-[protein] + ATP = O-phospho-L-threonyl-[protein] + ADP + H(+). This chain is Probable serine/threonine-protein kinase DDB_G0279405, found in Dictyostelium discoideum (Social amoeba).